A 160-amino-acid polypeptide reads, in one-letter code: Transcriptional repressor NrdR (160 aa).

The segment at 3 to 34 (CPFCGNADTQVVDSRVSEEGDTIRRRRRCLSC) is a zinc-finger region. The ATP-cone domain maps to 49–139 (PSVVKRDGSR…VYKSFEDIGE (91 aa)).

The protein belongs to the NrdR family. Requires Zn(2+) as cofactor.

In terms of biological role, negatively regulates transcription of bacterial ribonucleotide reductase nrd genes and operons by binding to NrdR-boxes. This Bordetella bronchiseptica (strain ATCC BAA-588 / NCTC 13252 / RB50) (Alcaligenes bronchisepticus) protein is Transcriptional repressor NrdR.